Here is a 298-residue protein sequence, read N- to C-terminus: GTP cyclohydrolase FolE2 (298 aa).

Belongs to the GTP cyclohydrolase IV family.

The catalysed reaction is GTP + H2O = 7,8-dihydroneopterin 3'-triphosphate + formate + H(+). It participates in cofactor biosynthesis; 7,8-dihydroneopterin triphosphate biosynthesis; 7,8-dihydroneopterin triphosphate from GTP: step 1/1. In terms of biological role, converts GTP to 7,8-dihydroneopterin triphosphate. The sequence is that of GTP cyclohydrolase FolE2 from Xylella fastidiosa (strain M12).